The primary structure comprises 267 residues: GTP cyclohydrolase FolE2 (267 aa).

This sequence belongs to the GTP cyclohydrolase IV family.

It carries out the reaction GTP + H2O = 7,8-dihydroneopterin 3'-triphosphate + formate + H(+). It participates in cofactor biosynthesis; 7,8-dihydroneopterin triphosphate biosynthesis; 7,8-dihydroneopterin triphosphate from GTP: step 1/1. Converts GTP to 7,8-dihydroneopterin triphosphate. The chain is GTP cyclohydrolase FolE2 from Cupriavidus necator (strain ATCC 17699 / DSM 428 / KCTC 22496 / NCIMB 10442 / H16 / Stanier 337) (Ralstonia eutropha).